We begin with the raw amino-acid sequence, 117 residues long: MIPGEYVLRPEPVTANAGRDAIELSVTNTGDRPVQVGSHFHFAEANAALDFDRAAARGRRLDIPAGTAARFEPGDSRSVRLIELAGSREVFGLSNAVNGKLDGGPHPGVPATERGAK.

The disordered stretch occupies residues 95-117; that stretch reads NAVNGKLDGGPHPGVPATERGAK.

Belongs to the urease beta subunit family. In terms of assembly, heterotrimer of UreA (gamma), UreB (beta) and UreC (alpha) subunits. Three heterotrimers associate to form the active enzyme.

It localises to the cytoplasm. It catalyses the reaction urea + 2 H2O + H(+) = hydrogencarbonate + 2 NH4(+). It participates in nitrogen metabolism; urea degradation; CO(2) and NH(3) from urea (urease route): step 1/1. This Pseudarthrobacter chlorophenolicus (strain ATCC 700700 / DSM 12829 / CIP 107037 / JCM 12360 / KCTC 9906 / NCIMB 13794 / A6) (Arthrobacter chlorophenolicus) protein is Urease subunit beta.